Consider the following 570-residue polypeptide: NADPH oxidase 2 (570 aa).

The Cytoplasmic portion of the chain corresponds to 2-9 (GNWAVNEG). A helical transmembrane segment spans residues 10–36 (LSIFVILVWLGLNVFLFINYYKVYDDG). Residues 37–46 (PKYNYTRKLL) lie on the Extracellular side of the membrane. An N-linked (GlcNAc...) asparagine glycan is attached at N40. A helical membrane pass occupies residues 47–72 (GSALALARAPAACLNFNCMLILLPVC). One can recognise a Ferric oxidoreductase domain in the interval 54-286 (RAPAACLNFN…MFLYLCERLV (233 aa)). Residues 73-95 (RNLLSFLRGSSACCSTRIRRQLD) lie on the Cytoplasmic side of the membrane. The chain crosses the membrane as a helical span at residues 96–130 (RNLTFHKMVAWMIALHTAIHTIAHLFNVEWCVNAR). Heme b is bound by residues H101 and H115. The Extracellular portion of the chain corresponds to 131 to 163 (VGISDRYSIALSDIGDNENEEYLNFAREKIKNP). Glycyl lysine isopeptide (Lys-Gly) (interchain with G-Cter in ubiquitin) cross-links involve residues K159 and K161. The chain crosses the membrane as a helical span at residues 164–194 (EGGLYVAVTRLAGITGIVITLCLILIITSST). Topologically, residues 195 to 203 (KTIRRSYFE) are cytoplasmic. FAD-binding residues include R199 and S200. The helical transmembrane segment at 204-222 (VFWYTHHLFVIFFIGLAIH) threads the bilayer. Heme b-binding residues include W206, H209, H222, R226, and I227. The Extracellular segment spans residues 223-267 (GAERIVRGQTAESLEEHNLDICADKIEEWGKIKECPVPKFAGNPP). K255 is covalently cross-linked (Glycyl lysine isopeptide (Lys-Gly) (interchain with G-Cter in ubiquitin)). Residues M268, Y280, and R287 each contribute to the heme b site. A helical membrane pass occupies residues 268–285 (MTWKWIVGPMFLYLCERL). The Cytoplasmic portion of the chain corresponds to 286–570 (VRFWRSQQKV…VHFIFNKENF (285 aa)). The FAD-binding FR-type domain occupies 287-397 (RFWRSQQKVV…DGPFGTASED (111 aa)). Glycyl lysine isopeptide (Lys-Gly) (interchain with G-Cter in ubiquitin) cross-links involve residues K294, K299, K306, K328, and K334. W337, H338, P339, T341, H354, R356, W361, and T362 together coordinate FAD. K381 is covalently cross-linked (Glycyl lysine isopeptide (Lys-Gly) (interchain with G-Cter in ubiquitin)). I411, R446, and T481 together coordinate NADPH. K506 participates in a covalent cross-link: Glycyl lysine isopeptide (Lys-Gly) (interchain with G-Cter in ubiquitin). An NADPH-binding site is contributed by R513. K567 is covalently cross-linked (Glycyl lysine isopeptide (Lys-Gly) (interchain with G-Cter in ubiquitin)).

In terms of assembly, component of the phagocyte NADPH oxidase core complex/cytochrome b558 complex, composed of CYBB (heavy chain (beta)) and CYBA (light chain (alpha)). Component of the phagocyte NADPH oxidase complex composed of an obligatory core heterodimer formed by the membrane proteins CYBA and CYBB and the cytosolic regulatory subunits NCF1/p47-phox, NCF2/p67-phox, NCF4/p40-phox and the small GTPase RAC1 or RAC2. Interacts with NCF1 (phosphorylated form). Interacts with NCF2; the interaction is enhanced in the presence of GBP7. Interacts with RAC2. Interacts with RAC1. Interacts with calprotectin (S100A8/9). Interacts with NRROS; the interaction is direct and impairs formation of a stable NADPH oxidase complex. Interacts with CYBC1; CYBC1 may act as a chaperone stabilizing Cytochrome b-245 heterodimer. The CYBA:CYBB complex interacts with GBP7. FAD serves as cofactor. Glycosylated. In terms of processing, phosphorylated on Ser and Thr residues by PKC during neutrophils activation. Phosphorylation enhances the NADPH oxidase activity and stimulates its interaction with RAC2, NCF2/p67-phox, and NCF1/p47-phox. Post-translationally, undergoes 'Lys-48'-linked polyubiquitination, likely by RNF145, triggering endoplasmic reticulum-associated degradation.

It is found in the cell membrane. The enzyme catalyses NADPH + 2 O2 = 2 superoxide + NADP(+) + H(+). Catalytic subunit of the phagocyte NADPH oxidase complex that mediates the transfer of electrons from cytosolic NADPH to O2 to produce the superoxide anion (O2(-)). In the activated complex, electrons are first transferred from NADPH to flavin adenine dinucleotide (FAD) and subsequently transferred via two heme molecules to molecular oxygen, producing superoxide through an outer-sphere reaction. Activation of the NADPH oxidase complex is initiated by the assembly of cytosolic subunits of the NADPH oxidase complex with the core NADPH oxidase complex to form a complex at the plasma membrane or phagosomal membrane. This activation process is initiated by phosphorylation dependent binding of the cytosolic NCF1/p47-phox subunit to the C-terminus of CYBA/p22-phox. NADPH oxidase complex assembly is impaired through interaction with NRROS. The polypeptide is NADPH oxidase 2 (Mus musculus (Mouse)).